The chain runs to 78 residues: Small ribosomal subunit protein uS17 (78 aa).

Belongs to the universal ribosomal protein uS17 family. In terms of assembly, part of the 30S ribosomal subunit.

Functionally, one of the primary rRNA binding proteins, it binds specifically to the 5'-end of 16S ribosomal RNA. This is Small ribosomal subunit protein uS17 from Rhizobium meliloti (strain 1021) (Ensifer meliloti).